A 132-amino-acid chain; its full sequence is Small ribosomal subunit protein uS8 (132 aa).

The protein belongs to the universal ribosomal protein uS8 family. In terms of assembly, part of the 30S ribosomal subunit. Contacts proteins S5 and S12.

Functionally, one of the primary rRNA binding proteins, it binds directly to 16S rRNA central domain where it helps coordinate assembly of the platform of the 30S subunit. The protein is Small ribosomal subunit protein uS8 of Caulobacter sp. (strain K31).